A 1110-amino-acid polypeptide reads, in one-letter code: cGMP-specific 3',5'-cyclic phosphodiesterase (1110 aa).

2 stretches are compositionally biased toward low complexity: residues Met1–Ser25 and Thr35–Ala55. Disordered stretches follow at residues Met1 to Ala55, Ile67 to Val128, and Ala184 to Ser203. Pro residues predominate over residues Ala88–Thr103. Low complexity predominate over residues Ser192–Ser203. 2 GAF domains span residues Asp233–Ile385 and Asn417–Ile601. A PDEase domain is found at Ser631 to Val954. The active-site Proton donor is the His707. 4 residues coordinate a divalent metal cation: His711, His747, Asp748, and Asp858. Disordered regions lie at residues Ala997–Leu1028 and Leu1040–Leu1110. Basic and acidic residues-rich tracts occupy residues Asp1006–Arg1015 and Leu1056–Ser1068. The segment covering Gly1082–Val1097 has biased composition (low complexity). Residues Ser1100 to Leu1110 are compositionally biased toward basic residues. Position 1107 is a cysteine methyl ester (Cys1107). Cys1107 is lipidated: S-farnesyl cysteine. Residues Ser1108–Leu1110 constitute a propeptide, removed in mature form.

Belongs to the cyclic nucleotide phosphodiesterase family. In terms of assembly, interacts with PrBP. A divalent metal cation serves as cofactor.

Its subcellular location is the cell membrane. It carries out the reaction 3',5'-cyclic GMP + H2O = GMP + H(+). Functionally, has a role regulating cGMP transport in Malpighian tubule principal cells. This chain is cGMP-specific 3',5'-cyclic phosphodiesterase, found in Drosophila pseudoobscura pseudoobscura (Fruit fly).